Consider the following 413-residue polypeptide: Alpha-1-antitrypsin-like protein CM55-ST (413 aa).

Residues Met1–Ala24 form the signal peptide. Gln25 bears the Pyrrolidone carboxylic acid mark. 4 N-linked (GlcNAc...) asparagine glycosylation sites follow: Asn65, Asn102, Asn165, and Asn266. The segment at Gly368–Arg387 is RCL.

Belongs to the serpin family. As to expression, expressed in liver.

The sequence is that of Alpha-1-antitrypsin-like protein CM55-ST from Tamias sibiricus (Siberian chipmunk).